We begin with the raw amino-acid sequence, 179 residues long: uncharacterized protein (179 aa).

The tract at residues threonine 27–lysine 54 is disordered.

This is an uncharacterized protein from Escherichia coli (strain K12).